A 399-amino-acid chain; its full sequence is Integral membrane protein GPR137B (399 aa).

Residues 1–22 form a disordered region; the sequence is MRPERPRPRGSAPGPMETPPWD. Residues 1-46 are Lumenal-facing; it reads MRPERPRPRGSAPGPMETPPWDPARNDSLPPTLTPAVPPYVKLGLT. Asparagine 26 carries an N-linked (GlcNAc...) asparagine glycan. The chain crosses the membrane as a helical span at residues 47 to 67; that stretch reads VVYTVFYALLFVFIYVQLWLV. Residues 68-79 are Cytoplasmic-facing; sequence LRYRHKRLSYQS. A helical membrane pass occupies residues 80–100; sequence VFLFLCLFWASLRTVLFSFYF. The Lumenal segment spans residues 101 to 111; it reads KDFVAANSLSP. Residues 112–132 traverse the membrane as a helical segment; it reads FVFWLLYCFPVCLQFFTLTLM. Residues 133–159 lie on the Cytoplasmic side of the membrane; that stretch reads NLYFTQVIFKAKSKYSPELLKYRLPLY. A helical membrane pass occupies residues 160–180; sequence LASLFISLVFLLVNLTCAVLV. The Lumenal segment spans residues 181–188; that stretch reads KTGNWERK. A helical membrane pass occupies residues 189-209; the sequence is VIVSVRVAINDTLFVLCAVSL. The Cytoplasmic segment spans residues 210 to 237; it reads SICLYKISKMSLANIYLESKGSSVCQVT. The chain crosses the membrane as a helical span at residues 238–258; sequence AIGVTVILLYTSRACYNLFIL. Residues 259–292 lie on the Lumenal side of the membrane; it reads SFSQNKSVHSFDYDWYNVSDQADLKNQLGDAGYV. N-linked (GlcNAc...) asparagine glycosylation is found at asparagine 263 and asparagine 275. Residues 293–313 form a helical membrane-spanning segment; it reads LFGVVLFVWELLPTTLVVYFF. Residues 314–399 lie on the Cytoplasmic side of the membrane; it reads RVRNPTKDLT…TLDPDKPSLG (86 aa).

This sequence belongs to the GPR137 family. Interaction with RRAGA; increases RRAGA recruitment to lysosomes. Interacts with MTOR; this interaction is amino acid sensitive. Expressed in kidney, heart, brain and placenta.

It localises to the lysosome membrane. In terms of biological role, lysosomal integral membrane protein that regulates the localization and activity of mTORC1, a signaling complex promoting cell growth in response to growth factors, energy levels, and amino acids. Interacts with Rag GTPases and increases the lysosomial localization and activity of Rag GTPases and thereby regulates mTORC1 translocation and activity in lysosome. Involved in the regulation of lysosomal morphology and autophagy. Also acts as a negative regulator of osteoclast activity. Involved in interleukin-4-induced M2 macrophage polarization. This Homo sapiens (Human) protein is Integral membrane protein GPR137B (GPR137B).